Reading from the N-terminus, the 664-residue chain is Protein SIEVE ELEMENT OCCLUSION C (664 aa).

This chain is Protein SIEVE ELEMENT OCCLUSION C, found in Arabidopsis thaliana (Mouse-ear cress).